Consider the following 338-residue polypeptide: Ketol-acid reductoisomerase (NADP(+)) (338 aa).

A KARI N-terminal Rossmann domain is found at 1–181 (MKVYYDKDAD…GGGKAGIIET (181 aa)). NADP(+) is bound by residues 24–27 (YGSQ), R47, and S52. The active site involves H107. G133 contributes to the NADP(+) binding site. The KARI C-terminal knotted domain occupies 182-327 (NFREETETDL…EKLRAMMPWI (146 aa)). Mg(2+) contacts are provided by D190, E194, E226, and E230. Residue S251 participates in substrate binding.

Belongs to the ketol-acid reductoisomerase family. Mg(2+) serves as cofactor.

The catalysed reaction is (2R)-2,3-dihydroxy-3-methylbutanoate + NADP(+) = (2S)-2-acetolactate + NADPH + H(+). It catalyses the reaction (2R,3R)-2,3-dihydroxy-3-methylpentanoate + NADP(+) = (S)-2-ethyl-2-hydroxy-3-oxobutanoate + NADPH + H(+). The protein operates within amino-acid biosynthesis; L-isoleucine biosynthesis; L-isoleucine from 2-oxobutanoate: step 2/4. It participates in amino-acid biosynthesis; L-valine biosynthesis; L-valine from pyruvate: step 2/4. In terms of biological role, involved in the biosynthesis of branched-chain amino acids (BCAA). Catalyzes an alkyl-migration followed by a ketol-acid reduction of (S)-2-acetolactate (S2AL) to yield (R)-2,3-dihydroxy-isovalerate. In the isomerase reaction, S2AL is rearranged via a Mg-dependent methyl migration to produce 3-hydroxy-3-methyl-2-ketobutyrate (HMKB). In the reductase reaction, this 2-ketoacid undergoes a metal-dependent reduction by NADPH to yield (R)-2,3-dihydroxy-isovalerate. The polypeptide is Ketol-acid reductoisomerase (NADP(+)) (Methylibium petroleiphilum (strain ATCC BAA-1232 / LMG 22953 / PM1)).